Here is a 218-residue protein sequence, read N- to C-terminus: Octanoyltransferase (218 aa).

The BPL/LPL catalytic domain maps to 31-206 (EETPDEVWLV…ELVNLLGYEQ (176 aa)). Substrate contacts are provided by residues 70 to 77 (RGGQVTYH), 137 to 139 (SLG), and 150 to 152 (GLA). Catalysis depends on Cys168, which acts as the Acyl-thioester intermediate.

The protein belongs to the LipB family.

Its subcellular location is the cytoplasm. It catalyses the reaction octanoyl-[ACP] + L-lysyl-[protein] = N(6)-octanoyl-L-lysyl-[protein] + holo-[ACP] + H(+). It functions in the pathway protein modification; protein lipoylation via endogenous pathway; protein N(6)-(lipoyl)lysine from octanoyl-[acyl-carrier-protein]: step 1/2. Catalyzes the transfer of endogenously produced octanoic acid from octanoyl-acyl-carrier-protein onto the lipoyl domains of lipoate-dependent enzymes. Lipoyl-ACP can also act as a substrate although octanoyl-ACP is likely to be the physiological substrate. The chain is Octanoyltransferase from Vibrio vulnificus (strain CMCP6).